The primary structure comprises 241 residues: Uridylate kinase (241 aa).

15 to 18 contacts ATP; sequence KLSG. The interval 23–28 is involved in allosteric activation by GTP; it reads GTEGFG. G57 lines the UMP pocket. ATP is bound by residues G58 and R62. UMP contacts are provided by residues D77 and 138 to 145; that span reads TGNPFFTT. ATP contacts are provided by T165, F171, and D174.

Belongs to the UMP kinase family. Homohexamer.

The protein localises to the cytoplasm. The catalysed reaction is UMP + ATP = UDP + ADP. It functions in the pathway pyrimidine metabolism; CTP biosynthesis via de novo pathway; UDP from UMP (UMPK route): step 1/1. Allosterically activated by GTP. Inhibited by UTP. In terms of biological role, catalyzes the reversible phosphorylation of UMP to UDP. This Salmonella choleraesuis (strain SC-B67) protein is Uridylate kinase.